The sequence spans 157 residues: Small ribosomal subunit protein uS7 (157 aa).

This sequence belongs to the universal ribosomal protein uS7 family. Part of the 30S ribosomal subunit. Contacts proteins S9 and S11.

One of the primary rRNA binding proteins, it binds directly to 16S rRNA where it nucleates assembly of the head domain of the 30S subunit. Is located at the subunit interface close to the decoding center, probably blocks exit of the E-site tRNA. The polypeptide is Small ribosomal subunit protein uS7 (Chlamydia pneumoniae (Chlamydophila pneumoniae)).